The chain runs to 415 residues: MFS-type transporter FVEG_12626 (415 aa).

Basic and acidic residues predominate over residues 1-18 (MDPDTEQMRVEKPNHEQP). Residues 1–22 (MDPDTEQMRVEKPNHEQPKPNT) form a disordered region. The next 6 helical transmembrane spans lie at 27 to 47 (GGFK…VGVF), 63 to 83 (TVSW…PFVG), 93 to 113 (YLLL…SISS), 118 to 138 (YILS…YPSF), 151 to 171 (LALG…PIVV), and 178 to 198 (IGFG…LLVT). A glycan (N-linked (GlcNAc...) asparagine) is linked at Asn-199. A run of 6 helical transmembrane segments spans residues 227 to 247 (FILT…PITF), 264 to 284 (YLVS…GYIA), 290 to 310 (FNVS…LWLP), 318 to 338 (IAFA…SPAL), 354 to 374 (TMYA…GALI), and 386 to 406 (VFAG…RLYI).

The protein belongs to the major facilitator superfamily. Monocarboxylate porter (TC 2.A.1.13) family.

The protein localises to the membrane. In terms of biological role, MFS-type transporter; part of the Fusarium detoxification of benzoxazolinone cluster 2 (FDB2) involved in the degradation of benzoxazolinones produced by the host plant. Maize, wheat, and rye produce the 2 benzoxazinone phytoanticipins 2,4-dihy-droxy-7-methoxy-1,4-benzoxazin-3-one (DIMBOA) and 2,4-dihydroxy-1,4-benzoxazin-3-one (DIBOA) that, due to their inherent instability once released, spontaneously degrade to the more stable corresponding benzoxazolinones, 6-methoxy-2-benzoxazolinone (MBOA) and 2-benzoxazolinone (BOA), respectively. The protein is MFS-type transporter FVEG_12626 of Gibberella moniliformis (strain M3125 / FGSC 7600) (Maize ear and stalk rot fungus).